The sequence spans 216 residues: Thiopurine S-methyltransferase (216 aa).

Positions 10, 45, 66, and 123 each coordinate S-adenosyl-L-methionine.

It belongs to the class I-like SAM-binding methyltransferase superfamily. TPMT family.

It localises to the cytoplasm. The catalysed reaction is S-adenosyl-L-methionine + a thiopurine = S-adenosyl-L-homocysteine + a thiopurine S-methylether.. This chain is Thiopurine S-methyltransferase, found in Pseudomonas entomophila (strain L48).